An 88-amino-acid chain; its full sequence is Co-chaperonin GroES (88 aa).

Belongs to the GroES chaperonin family. In terms of assembly, heptamer of 7 subunits arranged in a ring. Interacts with the chaperonin GroEL.

The protein resides in the cytoplasm. In terms of biological role, together with the chaperonin GroEL, plays an essential role in assisting protein folding. The GroEL-GroES system forms a nano-cage that allows encapsulation of the non-native substrate proteins and provides a physical environment optimized to promote and accelerate protein folding. GroES binds to the apical surface of the GroEL ring, thereby capping the opening of the GroEL channel. This is Co-chaperonin GroES from Thermodesulfovibrio yellowstonii (strain ATCC 51303 / DSM 11347 / YP87).